A 229-amino-acid polypeptide reads, in one-letter code: Large ribosomal subunit protein uL1 (229 aa).

This sequence belongs to the universal ribosomal protein uL1 family. As to quaternary structure, part of the 50S ribosomal subunit.

Functionally, binds directly to 23S rRNA. The L1 stalk is quite mobile in the ribosome, and is involved in E site tRNA release. Protein L1 is also a translational repressor protein, it controls the translation of the L11 operon by binding to its mRNA. This Pelagibacter ubique (strain HTCC1062) protein is Large ribosomal subunit protein uL1.